A 182-amino-acid polypeptide reads, in one-letter code: Heat shock protein beta-2 (182 aa).

One can recognise a sHSP domain in the interval 55-163 (RAGEGARAGA…DTEVNEVYIS (109 aa)).

The protein belongs to the small heat shock protein (HSP20) family. In terms of assembly, interacts with DMPK; may enhance its kinase activity.

The protein localises to the cytoplasm. The protein resides in the nucleus. May regulate the kinase DMPK. The protein is Heat shock protein beta-2 (Hspb2) of Mus musculus (Mouse).